Here is a 338-residue protein sequence, read N- to C-terminus: DNA-directed RNA polymerase subunit alpha (338 aa).

The alpha N-terminal domain (alpha-NTD) stretch occupies residues 1–233; that stretch reads MYKNWRELIK…EQLQIFINFD (233 aa). Positions 250 to 338 are alpha C-terminal domain (alpha-CTD); the sequence is INENLYRSVE…KMIQEGKEDL (89 aa).

It belongs to the RNA polymerase alpha chain family. As to quaternary structure, homodimer. The RNAP catalytic core consists of 2 alpha, 1 beta, 1 beta' and 1 omega subunit. When a sigma factor is associated with the core the holoenzyme is formed, which can initiate transcription.

It catalyses the reaction RNA(n) + a ribonucleoside 5'-triphosphate = RNA(n+1) + diphosphate. Its function is as follows. DNA-dependent RNA polymerase catalyzes the transcription of DNA into RNA using the four ribonucleoside triphosphates as substrates. This Syntrophotalea carbinolica (strain DSM 2380 / NBRC 103641 / GraBd1) (Pelobacter carbinolicus) protein is DNA-directed RNA polymerase subunit alpha.